The chain runs to 371 residues: Chaperone protein DnaJ (371 aa).

One can recognise a J domain in the interval 4 to 68; it reads DYYKILGVSK…QKRAAYDRFG (65 aa). The CR-type zinc finger occupies 134–212; it reads GIEKNISFSS…CHGMGRCHKQ (79 aa). Residues cysteine 147, cysteine 150, cysteine 164, cysteine 167, cysteine 186, cysteine 189, cysteine 200, and cysteine 203 each coordinate Zn(2+). 4 CXXCXGXG motif repeats span residues 147-154, 164-171, 186-193, and 200-207; these read CDTCHGSG, CDACGGVG, CHKCKGNG, and CKKCHGMG.

Belongs to the DnaJ family. Homodimer. The cofactor is Zn(2+).

Its subcellular location is the cytoplasm. Its function is as follows. Participates actively in the response to hyperosmotic and heat shock by preventing the aggregation of stress-denatured proteins and by disaggregating proteins, also in an autonomous, DnaK-independent fashion. Unfolded proteins bind initially to DnaJ; upon interaction with the DnaJ-bound protein, DnaK hydrolyzes its bound ATP, resulting in the formation of a stable complex. GrpE releases ADP from DnaK; ATP binding to DnaK triggers the release of the substrate protein, thus completing the reaction cycle. Several rounds of ATP-dependent interactions between DnaJ, DnaK and GrpE are required for fully efficient folding. Also involved, together with DnaK and GrpE, in the DNA replication of plasmids through activation of initiation proteins. The chain is Chaperone protein DnaJ from Rickettsia akari (strain Hartford).